A 589-amino-acid chain; its full sequence is Aspartate--tRNA ligase (589 aa).

An L-aspartate-binding site is contributed by E174. Positions 198 to 201 (QLFK) are aspartate. R220 is a binding site for L-aspartate. Residues 220–222 (RDE) and Q229 contribute to the ATP site. An L-aspartate-binding site is contributed by H448. E483 contacts ATP. An L-aspartate-binding site is contributed by R490. Residue 535 to 538 (GIDR) coordinates ATP.

The protein belongs to the class-II aminoacyl-tRNA synthetase family. Type 1 subfamily. Homodimer.

It localises to the cytoplasm. The catalysed reaction is tRNA(Asp) + L-aspartate + ATP = L-aspartyl-tRNA(Asp) + AMP + diphosphate. Its function is as follows. Catalyzes the attachment of L-aspartate to tRNA(Asp) in a two-step reaction: L-aspartate is first activated by ATP to form Asp-AMP and then transferred to the acceptor end of tRNA(Asp). This chain is Aspartate--tRNA ligase, found in Xylella fastidiosa (strain M12).